The primary structure comprises 350 residues: S-adenosylmethionine:tRNA ribosyltransferase-isomerase (350 aa).

The protein belongs to the QueA family. Monomer.

The protein localises to the cytoplasm. The enzyme catalyses 7-aminomethyl-7-carbaguanosine(34) in tRNA + S-adenosyl-L-methionine = epoxyqueuosine(34) in tRNA + adenine + L-methionine + 2 H(+). It participates in tRNA modification; tRNA-queuosine biosynthesis. In terms of biological role, transfers and isomerizes the ribose moiety from AdoMet to the 7-aminomethyl group of 7-deazaguanine (preQ1-tRNA) to give epoxyqueuosine (oQ-tRNA). This is S-adenosylmethionine:tRNA ribosyltransferase-isomerase from Vibrio vulnificus (strain YJ016).